The sequence spans 190 residues: COMM domain-containing protein 1 (190 aa).

N-acetylalanine is present on Ala2. The sufficient for interaction with SLC12A2 stretch occupies residues 2–123; that stretch reads AAGELEGGKP…RWNSGLRGLS (122 aa). Cu cation-binding residues include His101, Met110, and His134. One can recognise a COMM domain in the interval 118–186; that stretch reads GLRGLSWRVD…EVEESISTLI (69 aa). Residues 125 to 190 are required for binding to PtdIns(4,5)P2; it reads RVDGKSQSRH…SISTLISQPN (66 aa).

It belongs to the COMM domain-containing protein 1 family. As to quaternary structure, component of the commander complex consisting of the CCC subcomplex and the retriever subcomplex. Component of the CCC (COMMD/CCDC22/CCDC93) subcomplex consisting of COMMD1, COMMD2, COMMD3, COMMD4, COMMD5, COMMD6, COMMD7, COMMD8, COMMD9, COMMD10, CCDC22 and CCDC93; within the complex forms a heterodimer with COMMD6. Interacts with VPS35L; the interaction associates the CCC complex with the retriever complex. Identified in a complex with an E3 ubiquitin ligase complex composed of TCEB1/elongin C, CUL2, SOCS1 and RBX1; in the complex interacts directly with SOCS1 and CUL2. Identified in a complex with NF-kappa-B. Interacts directly with SLC12A2. Interacts directly with ATP7B (via the N-terminal region). Interacts with ATP7A. Interacts with FAM107A; this interaction stabilizes COMMD1 in the nucleus. Interacts with CCS, CDKN2A, RELA, REL, RELB, NFKB1/p105, NFKB2/p100, NFKBIB, SCNN1D, SCNN1B, CFTR, CLU, SGK1, AKT1, CUL1, CUL2, CUL3, CUL4A, CUL4B, CUL5, CUL7, HIF1A. Post-translationally, acetylated by EP300 ina stimuli-specific manner; protecting it from XIAP-mediated proteasomal degradation and required for interaction with RElA in response to stress. In terms of processing, ubiquitinated; undergoes both 'Lys-63'- and 'Lys-48'-linked polyubiquitination. Ubiquitinated by XIAP, leading to its proteasomal degradation. In terms of tissue distribution, ubiquitous. Highest expression in the liver, with lower expression in brain, lung, placenta, pancreas, small intestine, heart, skeletal muscle, kidney and placenta. Down-regulated in cancer tissues.

Its subcellular location is the nucleus. The protein localises to the cytoplasm. It localises to the endosome membrane. It is found in the cytoplasmic vesicle. The protein resides in the early endosome. Its subcellular location is the recycling endosome. In terms of biological role, scaffold protein in the commander complex that is essential for endosomal recycling of transmembrane cargos; the commander complex is composed of the CCC subcomplex and the retriever subcomplex. Can modulate activity of cullin-RING E3 ubiquitin ligase (CRL) complexes by displacing CAND1; in vitro promotes CRL E3 activity and dissociates CAND1 from CUL1 and CUL2. Promotes ubiquitination of NF-kappa-B subunit RELA and its subsequent proteasomal degradation. Down-regulates NF-kappa-B activity. Involved in the regulation of membrane expression and ubiquitination of SLC12A2. Modulates Na(+) transport in epithelial cells by regulation of apical cell surface expression of amiloride-sensitive sodium channel (ENaC) subunits and by promoting their ubiquitination presumably involving NEDD4L. Promotes the localization of SCNN1D to recycling endosomes. Promotes CFTR cell surface expression through regulation of its ubiquitination. Down-regulates SOD1 activity by interfering with its homodimerization. Plays a role in copper ion homeostasis. Involved in copper-dependent ATP7A trafficking between the trans-Golgi network and vesicles in the cell periphery; the function is proposed to depend on its association within the CCC complex and cooperation with the WASH complex on early endosomes. Can bind one copper ion per monomer. May function to facilitate biliary copper excretion within hepatocytes. Binds to phosphatidylinositol 4,5-bisphosphate (PtdIns(4,5)P2). Involved in the regulation of HIF1A-mediated transcription; competes with ARNT/Hif-1-beta for binding to HIF1A resulting in decreased DNA binding and impaired transcriptional activation by HIF-1. Negatively regulates neuroblastoma G1/S phase cell cycle progression and cell proliferation by stimulating ubiquitination of NF-kappa-B subunit RELA and NF-kappa-B degradation in a FAM107A- and actin-dependent manner. This Homo sapiens (Human) protein is COMM domain-containing protein 1 (COMMD1).